A 262-amino-acid polypeptide reads, in one-letter code: uncharacterized protein (262 aa).

The chain crosses the membrane as a helical span at residues 13 to 35; the sequence is VVGALLTVVVIVTAAGIIYVISH.

The protein localises to the membrane. This is an uncharacterized protein from Archaeoglobus fulgidus (strain ATCC 49558 / DSM 4304 / JCM 9628 / NBRC 100126 / VC-16).